The sequence spans 468 residues: Cysteine--tRNA ligase (468 aa).

Position 33 (cysteine 33) interacts with Zn(2+). The 'HIGH' region signature appears at 35–45; sequence ATVQGLPHIGH. The Zn(2+) site is built by cysteine 211, histidine 236, and glutamate 240. A 'KMSKS' region motif is present at residues 267-271; it reads KMSKS. Residue lysine 270 participates in ATP binding.

This sequence belongs to the class-I aminoacyl-tRNA synthetase family. In terms of assembly, monomer. Requires Zn(2+) as cofactor.

Its subcellular location is the cytoplasm. The catalysed reaction is tRNA(Cys) + L-cysteine + ATP = L-cysteinyl-tRNA(Cys) + AMP + diphosphate. The protein is Cysteine--tRNA ligase of Mycobacterium ulcerans (strain Agy99).